The following is a 170-amino-acid chain: Adenine phosphoribosyltransferase (170 aa).

It belongs to the purine/pyrimidine phosphoribosyltransferase family. Homodimer.

It localises to the cytoplasm. It catalyses the reaction AMP + diphosphate = 5-phospho-alpha-D-ribose 1-diphosphate + adenine. It participates in purine metabolism; AMP biosynthesis via salvage pathway; AMP from adenine: step 1/1. Catalyzes a salvage reaction resulting in the formation of AMP, that is energically less costly than de novo synthesis. The protein is Adenine phosphoribosyltransferase of Prochlorococcus marinus (strain MIT 9312).